A 905-amino-acid chain; its full sequence is Probable coatomer subunit gamma (905 aa).

HEAT repeat units follow at residues 265–302 (TQFRDQMVPFLHGWLKSKGDMVNLEVARNMVRLKNISD), 303–340 (DDLQPVVSVLKIFLSSHRSATRFSAIRTLNELAMTRPH), 374–412 (DESVDRLMKQIVTFMSDISDNFKIIVVDAIRSLCLKFPR), 414–450 (QDSMLTFLSNILCDEGGYEFKRAAVDAISDMIKYIPE), and 525–563 (KFVQRSVKVILTRCLEDADDEVRDRAAFSVKALEDRDAF). Ser604 is subject to Phosphoserine.

Belongs to the COPG family. Oligomeric complex that consists of at least the alpha, beta, beta', gamma, delta, epsilon and zeta subunits.

It localises to the cytoplasm. The protein localises to the golgi apparatus membrane. It is found in the cytoplasmic vesicle. Its subcellular location is the COPI-coated vesicle membrane. Its function is as follows. The coatomer is a cytosolic protein complex that binds to dilysine motifs and reversibly associates with Golgi non-clathrin-coated vesicles, which further mediate biosynthetic protein transport from the ER, via the Golgi up to the trans Golgi network. Coatomer complex is required for budding from Golgi membranes, and is essential for the retrograde Golgi-to-ER transport of dilysine-tagged proteins. The protein is Probable coatomer subunit gamma (sec21) of Schizosaccharomyces pombe (strain 972 / ATCC 24843) (Fission yeast).